We begin with the raw amino-acid sequence, 138 residues long: ATP synthase epsilon chain (138 aa).

Belongs to the ATPase epsilon chain family. As to quaternary structure, F-type ATPases have 2 components, CF(1) - the catalytic core - and CF(0) - the membrane proton channel. CF(1) has five subunits: alpha(3), beta(3), gamma(1), delta(1), epsilon(1). CF(0) has three main subunits: a, b and c.

It is found in the cell inner membrane. Functionally, produces ATP from ADP in the presence of a proton gradient across the membrane. This is ATP synthase epsilon chain from Methylibium petroleiphilum (strain ATCC BAA-1232 / LMG 22953 / PM1).